The sequence spans 449 residues: Tubulin beta-7 chain (449 aa).

Residues Gln11, Glu69, Ser138, Gly142, Thr143, Gly144, Asn204, and Asn226 each contribute to the GTP site. Glu69 serves as a coordination point for Mg(2+). Residues 422 to 449 (YQQYQDATADEEGEYEEEEAEYEQEETY) form a disordered region. A compositionally biased stretch (acidic residues) spans 429-449 (TADEEGEYEEEEAEYEQEETY).

Belongs to the tubulin family. As to quaternary structure, dimer of alpha and beta chains. A typical microtubule is a hollow water-filled tube with an outer diameter of 25 nm and an inner diameter of 15 nM. Alpha-beta heterodimers associate head-to-tail to form protofilaments running lengthwise along the microtubule wall with the beta-tubulin subunit facing the microtubule plus end conferring a structural polarity. Microtubules usually have 13 protofilaments but different protofilament numbers can be found in some organisms and specialized cells. The cofactor is Mg(2+).

It localises to the cytoplasm. It is found in the cytoskeleton. In terms of biological role, tubulin is the major constituent of microtubules, a cylinder consisting of laterally associated linear protofilaments composed of alpha- and beta-tubulin heterodimers. Microtubules grow by the addition of GTP-tubulin dimers to the microtubule end, where a stabilizing cap forms. Below the cap, tubulin dimers are in GDP-bound state, owing to GTPase activity of alpha-tubulin. The polypeptide is Tubulin beta-7 chain (TUBB7) (Arabidopsis thaliana (Mouse-ear cress)).